Reading from the N-terminus, the 342-residue chain is ATP synthase subunit a (342 aa).

Helical transmembrane passes span 11 to 31, 109 to 129, 170 to 190, 199 to 219, 238 to 258, 262 to 282, 287 to 307, and 308 to 328; these read GLIK…AFAS, HVVT…IIGS, YLPY…LGLV, NINV…IAAL, ALWI…PVAL, LFAN…ISFI, IVAV…EIFV, and AFLQ…LASA.

This sequence belongs to the ATPase A chain family. In terms of assembly, F-type ATPases have 2 components, CF(1) - the catalytic core - and CF(0) - the membrane proton channel. CF(1) has five subunits: alpha(3), beta(3), gamma(1), delta(1), epsilon(1). CF(0) has four main subunits: a, b, b' and c.

The protein resides in the cell inner membrane. In terms of biological role, key component of the proton channel; it plays a direct role in the translocation of protons across the membrane. This chain is ATP synthase subunit a, found in Chlorobium phaeobacteroides (strain DSM 266 / SMG 266 / 2430).